The primary structure comprises 155 residues: Small ribosomal subunit protein uS7 (155 aa).

The protein belongs to the universal ribosomal protein uS7 family. In terms of assembly, part of the 30S ribosomal subunit. Contacts proteins S9 and S11.

One of the primary rRNA binding proteins, it binds directly to 16S rRNA where it nucleates assembly of the head domain of the 30S subunit. Is located at the subunit interface close to the decoding center, probably blocks exit of the E-site tRNA. The protein is Small ribosomal subunit protein uS7 of Chlorobium luteolum (strain DSM 273 / BCRC 81028 / 2530) (Pelodictyon luteolum).